A 164-amino-acid chain; its full sequence is 3-isopropylmalate dehydratase small subunit 2 (164 aa).

It belongs to the LeuD family. LeuD type 2 subfamily. Heterodimer of LeuC and LeuD.

It carries out the reaction (2R,3S)-3-isopropylmalate = (2S)-2-isopropylmalate. It functions in the pathway amino-acid biosynthesis; L-leucine biosynthesis; L-leucine from 3-methyl-2-oxobutanoate: step 2/4. Its function is as follows. Catalyzes the isomerization between 2-isopropylmalate and 3-isopropylmalate, via the formation of 2-isopropylmaleate. This is 3-isopropylmalate dehydratase small subunit 2 (leuD2) from Pyrococcus furiosus (strain ATCC 43587 / DSM 3638 / JCM 8422 / Vc1).